The chain runs to 321 residues: Protoheme IX farnesyltransferase (321 aa).

10 helical membrane-spanning segments follow: residues 28–48 (VMSL…DPVH), 49–69 (PIVG…SGAL), 94–114 (VMPN…VFTL), 116–136 (IVAN…YVVI), 149–169 (IVIG…AATG), 176–196 (FILF…LALG), 222–242 (ILLY…LGFA), 247–267 (GMLS…VYIV), 277–297 (AKAL…EIVV), and 300–320 (LVPI…PGFF).

Belongs to the UbiA prenyltransferase family. Protoheme IX farnesyltransferase subfamily.

Its subcellular location is the cell inner membrane. It catalyses the reaction heme b + (2E,6E)-farnesyl diphosphate + H2O = Fe(II)-heme o + diphosphate. The protein operates within porphyrin-containing compound metabolism; heme O biosynthesis; heme O from protoheme: step 1/1. Its function is as follows. Converts heme B (protoheme IX) to heme O by substitution of the vinyl group on carbon 2 of heme B porphyrin ring with a hydroxyethyl farnesyl side group. This is Protoheme IX farnesyltransferase from Beijerinckia indica subsp. indica (strain ATCC 9039 / DSM 1715 / NCIMB 8712).